The following is a 206-amino-acid chain: Small ribosomal subunit protein uS4 (206 aa).

The S4 RNA-binding domain maps to Gly96 to Lys156.

This sequence belongs to the universal ribosomal protein uS4 family. In terms of assembly, part of the 30S ribosomal subunit. Contacts protein S5. The interaction surface between S4 and S5 is involved in control of translational fidelity.

Its function is as follows. One of the primary rRNA binding proteins, it binds directly to 16S rRNA where it nucleates assembly of the body of the 30S subunit. Functionally, with S5 and S12 plays an important role in translational accuracy. In Glaesserella parasuis serovar 5 (strain SH0165) (Haemophilus parasuis), this protein is Small ribosomal subunit protein uS4.